The primary structure comprises 174 residues: Keratin-associated protein 1-5 (174 aa).

Positions 3 to 172 (CCQTSFCGYP…CCRPVCCCEP (170 aa)) are 15 X 5 AA repeats of C-C-[QEPVRC]-[TPIVLE]-[SRHVP].

The protein belongs to the KRTAP type 1 family. As to quaternary structure, interacts with hair keratins. In terms of tissue distribution, expressed in the middle/upper portions of the hair cortex, in the region termed the keratogenous zone.

Its function is as follows. In the hair cortex, hair keratin intermediate filaments are embedded in an interfilamentous matrix, consisting of hair keratin-associated proteins (KRTAP), which are essential for the formation of a rigid and resistant hair shaft through their extensive disulfide bond cross-linking with abundant cysteine residues of hair keratins. The matrix proteins include the high-sulfur and high-glycine-tyrosine keratins. The polypeptide is Keratin-associated protein 1-5 (KRTAP1-5) (Homo sapiens (Human)).